Here is a 376-residue protein sequence, read N- to C-terminus: Queuine tRNA-ribosyltransferase (376 aa).

Catalysis depends on Asp-90, which acts as the Proton acceptor. Substrate-binding positions include 90–94 (DSGGF), Asp-144, Gln-193, and Gly-220. The tract at residues 251-257 (GVGTPED) is RNA binding. Asp-270 acts as the Nucleophile in catalysis. An RNA binding; important for wobble base 34 recognition region spans residues 275-279 (TRNAR). 4 residues coordinate Zn(2+): Cys-308, Cys-310, Cys-313, and His-339.

It belongs to the queuine tRNA-ribosyltransferase family. Homodimer. Within each dimer, one monomer is responsible for RNA recognition and catalysis, while the other monomer binds to the replacement base PreQ1. The cofactor is Zn(2+).

It carries out the reaction 7-aminomethyl-7-carbaguanine + guanosine(34) in tRNA = 7-aminomethyl-7-carbaguanosine(34) in tRNA + guanine. It participates in tRNA modification; tRNA-queuosine biosynthesis. Catalyzes the base-exchange of a guanine (G) residue with the queuine precursor 7-aminomethyl-7-deazaguanine (PreQ1) at position 34 (anticodon wobble position) in tRNAs with GU(N) anticodons (tRNA-Asp, -Asn, -His and -Tyr). Catalysis occurs through a double-displacement mechanism. The nucleophile active site attacks the C1' of nucleotide 34 to detach the guanine base from the RNA, forming a covalent enzyme-RNA intermediate. The proton acceptor active site deprotonates the incoming PreQ1, allowing a nucleophilic attack on the C1' of the ribose to form the product. After dissociation, two additional enzymatic reactions on the tRNA convert PreQ1 to queuine (Q), resulting in the hypermodified nucleoside queuosine (7-(((4,5-cis-dihydroxy-2-cyclopenten-1-yl)amino)methyl)-7-deazaguanosine). In Campylobacter concisus (strain 13826), this protein is Queuine tRNA-ribosyltransferase.